The following is a 135-amino-acid chain: MPTINQLVRKGRHSKTTKSKSPALNYSYNSMKKEQVFNPAPQMRGVATRVGTMTPKKPNSALRKYARVRLSNLTEVTAYIPGEGHNLQEHSVVLIRGGRVKDLPGVRYHIVRGALDTAGVDGRKQARSKYGAKKG.

Residues methionine 1–leucine 24 form a disordered region. A compositionally biased stretch (basic residues) spans arginine 9 to lysine 18. Aspartate 102 carries the 3-methylthioaspartic acid modification.

This sequence belongs to the universal ribosomal protein uS12 family. In terms of assembly, part of the 30S ribosomal subunit. Contacts proteins S8 and S17. May interact with IF1 in the 30S initiation complex.

In terms of biological role, with S4 and S5 plays an important role in translational accuracy. Interacts with and stabilizes bases of the 16S rRNA that are involved in tRNA selection in the A site and with the mRNA backbone. Located at the interface of the 30S and 50S subunits, it traverses the body of the 30S subunit contacting proteins on the other side and probably holding the rRNA structure together. The combined cluster of proteins S8, S12 and S17 appears to hold together the shoulder and platform of the 30S subunit. This Lactobacillus delbrueckii subsp. bulgaricus (strain ATCC 11842 / DSM 20081 / BCRC 10696 / JCM 1002 / NBRC 13953 / NCIMB 11778 / NCTC 12712 / WDCM 00102 / Lb 14) protein is Small ribosomal subunit protein uS12.